A 366-amino-acid polypeptide reads, in one-letter code: Ribosomal RNA large subunit methyltransferase M (366 aa).

Residues serine 188, 221-224, aspartate 240, aspartate 260, and aspartate 277 each bind S-adenosyl-L-methionine; that span reads CPGG. Catalysis depends on lysine 306, which acts as the Proton acceptor.

Belongs to the class I-like SAM-binding methyltransferase superfamily. RNA methyltransferase RlmE family. RlmM subfamily. In terms of assembly, monomer.

It is found in the cytoplasm. The enzyme catalyses cytidine(2498) in 23S rRNA + S-adenosyl-L-methionine = 2'-O-methylcytidine(2498) in 23S rRNA + S-adenosyl-L-homocysteine + H(+). Functionally, catalyzes the 2'-O-methylation at nucleotide C2498 in 23S rRNA. The sequence is that of Ribosomal RNA large subunit methyltransferase M from Salmonella dublin (strain CT_02021853).